The sequence spans 333 residues: Fe(3+)-citrate import system permease protein YfmD (333 aa).

The next 9 membrane-spanning stretches (helical) occupy residues leucine 13–valine 33, threonine 67–methionine 87, isoleucine 97–alanine 117, serine 121–alanine 141, leucine 151–isoleucine 171, phenylalanine 201–leucine 221, isoleucine 238–isoleucine 258, tyrosine 279–alanine 299, and isoleucine 302–phenylalanine 322.

The protein belongs to the binding-protein-dependent transport system permease family. FecCD subfamily. The complex is composed of one ATP-binding protein (YfmF), two transmembrane proteins (YfmD and YfmE) and a solute-binding protein (YfmC).

It is found in the cell membrane. Functionally, part of the ABC transporter complex YfmCDEF involved in citrate-dependent Fe(3+) import. Involved in the translocation of the substrate across the membrane. This chain is Fe(3+)-citrate import system permease protein YfmD (yfmD), found in Bacillus subtilis (strain 168).